The following is a 44-amino-acid chain: Mu-conotoxin-like Cal 12.1.1e (44 aa).

Intrachain disulfides connect cysteine 3–cysteine 16, cysteine 11–cysteine 28, cysteine 18–cysteine 33, and cysteine 27–cysteine 38. The residue at position 17 (tryptophan 17) is a 6'-bromotryptophan. A 4-hydroxyproline modification is found at proline 23. 6'-bromotryptophan is present on residues tryptophan 36 and tryptophan 37. Proline 39 carries the post-translational modification 4-hydroxyproline. Residue tryptophan 43 is modified to 6'-bromotryptophan.

As to expression, expressed by the venom duct.

Its subcellular location is the secreted. Its function is as follows. Mu-conotoxins block voltage-gated sodium channels. This toxin reversibly blocks voltage-gated sodium channel in cephalopods, with no alteration in the voltage dependence of sodium conductance or on the kinetics of inactivation. The chain is Mu-conotoxin-like Cal 12.1.1e from Californiconus californicus (California cone).